Here is a 220-residue protein sequence, read N- to C-terminus: 7-cyano-7-deazaguanine synthase (220 aa).

Phe-10 to Leu-20 contacts ATP. The Zn(2+) site is built by Cys-186, Cys-195, Cys-198, and Cys-201.

Belongs to the QueC family. Homodimer. Zn(2+) serves as cofactor.

The enzyme catalyses 7-carboxy-7-deazaguanine + NH4(+) + ATP = 7-cyano-7-deazaguanine + ADP + phosphate + H2O + H(+). It functions in the pathway purine metabolism; 7-cyano-7-deazaguanine biosynthesis. In terms of biological role, catalyzes the ATP-dependent conversion of 7-carboxy-7-deazaguanine (CDG) to 7-cyano-7-deazaguanine (preQ(0)). The protein is 7-cyano-7-deazaguanine synthase of Bacillus cereus (strain G9842).